The sequence spans 297 residues: Formylmethanofuran--tetrahydromethanopterin formyltransferase (297 aa).

It belongs to the FTR family. As to quaternary structure, homotetramer.

It localises to the cytoplasm. The enzyme catalyses N-formylmethanofuran + 5,6,7,8-tetrahydromethanopterin + H(+) = N(5)-formyl-5,6,7,8-tetrahydromethanopterin + methanofuran. Its pathway is one-carbon metabolism; methanogenesis from CO(2); 5,10-methenyl-5,6,7,8-tetrahydromethanopterin from CO(2): step 2/3. Functionally, catalyzes the reversible transfer of a formyl group from formylmethanofuran (formyl-MFR) to tetrahydromethanopterin (H(4)MPT) to produce 5-formyl tetrahydromethanopterin (5-formyl-H(4)MPT) and methanofuran (MFR). The polypeptide is Formylmethanofuran--tetrahydromethanopterin formyltransferase (Methanosarcina acetivorans (strain ATCC 35395 / DSM 2834 / JCM 12185 / C2A)).